A 294-amino-acid polypeptide reads, in one-letter code: MSDYIASALSRDEHFRIFAADATQTVREAQRRHDTWSASSAALGRALVATALLAASGLKNADDMLTVRIKGDGPVGALVTDGTNVGTVRGYVEEPHVNLPLNLVGKIDVARAVGKRGLLAVTKDIGVGDPFTGQVPLVSGELAEDFTYYLAKSEQIPAAVGLSVFVNADNTIQVAGGFMLQALPGANDAELSELEANVKTLPLVSELLKSGLTPKQIIQRIAGDEPVQFLDAQPLKFACNCSKEHFGDIMATLPHAQLQEMIDQDGGAETTCKFCGNQYHYTVADLEALMTRHE.

2 cysteine pairs are disulfide-bonded: Cys239/Cys241 and Cys272/Cys275.

This sequence belongs to the HSP33 family. In terms of processing, under oxidizing conditions two disulfide bonds are formed involving the reactive cysteines. Under reducing conditions zinc is bound to the reactive cysteines and the protein is inactive.

The protein resides in the cytoplasm. Redox regulated molecular chaperone. Protects both thermally unfolding and oxidatively damaged proteins from irreversible aggregation. Plays an important role in the bacterial defense system toward oxidative stress. The chain is 33 kDa chaperonin from Lacticaseibacillus paracasei (strain ATCC 334 / BCRC 17002 / CCUG 31169 / CIP 107868 / KCTC 3260 / NRRL B-441) (Lactobacillus paracasei).